We begin with the raw amino-acid sequence, 701 residues long: Serologically defined colon cancer antigen 8 homolog (701 aa).

Positions 1-13 are enriched in acidic residues; sequence MKPSLESDEEEEL. Disordered regions lie at residues 1-67 and 84-114; these read MKPS…VQQS and ANIQ…GVHN. A compositionally biased stretch (polar residues) spans 45 to 67; the sequence is SEPNQQELLSSVQQNPCSPVQQS. Coiled coils occupy residues 119–173, 203–258, and 323–695; these read INNQ…LKEY, HKWR…AVAA, and QQVK…AGKR. Residues 364–387 are disordered; the sequence is LASEQDKISQAREAARSESKKERE.

It is found in the cytoplasm. Its subcellular location is the cytoskeleton. The protein resides in the microtubule organizing center. It localises to the centrosome. The protein localises to the centriole. It is found in the cilium basal body. Its subcellular location is the cell junction. Plays a role in the establishment of cell polarity and epithelial lumen formation. Also plays an essential role in ciliogenesis and subsequent Hedgehog signaling pathway that requires the presence of intact primary cilia for pathway activation. Mechanistically, interacts with and mediates RABEP2 centrosomal localization which is critical for ciliogenesis. This is Serologically defined colon cancer antigen 8 homolog (Sdccag8) from Danio rerio (Zebrafish).